The sequence spans 309 residues: Malate dehydrogenase (309 aa).

Residues 9-14 (GAGFVG) and D33 each bind NAD(+). Substrate contacts are provided by R82 and R88. NAD(+) is bound by residues N95 and 118 to 120 (VNN). Substrate contacts are provided by N120 and R151. H175 acts as the Proton acceptor in catalysis.

Belongs to the LDH/MDH superfamily. MDH type 3 family.

The enzyme catalyses (S)-malate + NAD(+) = oxaloacetate + NADH + H(+). Catalyzes the reversible oxidation of malate to oxaloacetate. This is Malate dehydrogenase from Roseiflexus castenholzii (strain DSM 13941 / HLO8).